We begin with the raw amino-acid sequence, 123 residues long: Large ribosomal subunit protein uL14 (123 aa).

The protein belongs to the universal ribosomal protein uL14 family. Part of the 50S ribosomal subunit. Forms a cluster with proteins L3 and L19. In the 70S ribosome, L14 and L19 interact and together make contacts with the 16S rRNA in bridges B5 and B8.

Binds to 23S rRNA. Forms part of two intersubunit bridges in the 70S ribosome. This Citrobacter koseri (strain ATCC BAA-895 / CDC 4225-83 / SGSC4696) protein is Large ribosomal subunit protein uL14.